The chain runs to 175 residues: Large ribosomal subunit protein uL18 (175 aa).

Belongs to the universal ribosomal protein uL18 family. Part of the 50S ribosomal subunit. Contacts the 5S and 23S rRNAs.

Functionally, this is one of the proteins that bind and probably mediate the attachment of the 5S RNA into the large ribosomal subunit, where it forms part of the central protuberance. The sequence is that of Large ribosomal subunit protein uL18 from Methanosphaerula palustris (strain ATCC BAA-1556 / DSM 19958 / E1-9c).